The primary structure comprises 64 residues: MQGTELREKTTEELEALLKELRAKLVNLKFQLSVGKLTDHTAITKTKRDIARVLTVLRERGIKL.

Belongs to the universal ribosomal protein uL29 family.

The chain is Large ribosomal subunit protein uL29 from Coprothermobacter proteolyticus (strain ATCC 35245 / DSM 5265 / OCM 4 / BT).